The chain runs to 357 residues: GTPase Obg (357 aa).

In terms of domain architecture, Obg spans Met-1–Leu-159. One can recognise an OBG-type G domain in the interval Ala-160–Glu-343. Residues Gly-166 to Ser-173, Phe-191 to Tyr-195, Asp-213 to Gly-216, Asn-293 to Asp-296, and Ser-324 to Val-326 each bind GTP. Residues Ser-173 and Thr-193 each coordinate Mg(2+).

Belongs to the TRAFAC class OBG-HflX-like GTPase superfamily. OBG GTPase family. Monomer. Mg(2+) is required as a cofactor.

It localises to the cytoplasm. Functionally, an essential GTPase which binds GTP, GDP and possibly (p)ppGpp with moderate affinity, with high nucleotide exchange rates and a fairly low GTP hydrolysis rate. Plays a role in control of the cell cycle, stress response, ribosome biogenesis and in those bacteria that undergo differentiation, in morphogenesis control. The polypeptide is GTPase Obg (Xylella fastidiosa (strain M23)).